The chain runs to 214 residues: tRNA (guanine-N(7)-)-methyltransferase (214 aa).

Positions 43, 68, 95, and 117 each coordinate S-adenosyl-L-methionine. Aspartate 117 is a catalytic residue. Substrate is bound by residues lysine 121, aspartate 153, and 190–193 (TEYE).

It belongs to the class I-like SAM-binding methyltransferase superfamily. TrmB family.

The enzyme catalyses guanosine(46) in tRNA + S-adenosyl-L-methionine = N(7)-methylguanosine(46) in tRNA + S-adenosyl-L-homocysteine. Its pathway is tRNA modification; N(7)-methylguanine-tRNA biosynthesis. Catalyzes the formation of N(7)-methylguanine at position 46 (m7G46) in tRNA. In Staphylococcus aureus (strain COL), this protein is tRNA (guanine-N(7)-)-methyltransferase.